Reading from the N-terminus, the 423-residue chain is Glutamate-1-semialdehyde 2,1-aminomutase (423 aa).

Lys-263 carries the N6-(pyridoxal phosphate)lysine modification.

It belongs to the class-III pyridoxal-phosphate-dependent aminotransferase family. HemL subfamily. The cofactor is pyridoxal 5'-phosphate.

The protein resides in the cytoplasm. It catalyses the reaction (S)-4-amino-5-oxopentanoate = 5-aminolevulinate. Its pathway is porphyrin-containing compound metabolism; protoporphyrin-IX biosynthesis; 5-aminolevulinate from L-glutamyl-tRNA(Glu): step 2/2. This Ignicoccus hospitalis (strain KIN4/I / DSM 18386 / JCM 14125) protein is Glutamate-1-semialdehyde 2,1-aminomutase.